The chain runs to 309 residues: Protein FdhE homolog (309 aa).

The segment at 1 to 22 (MSIRIVPQEQLEQNGKSTPEGH) is disordered.

Belongs to the FdhE family.

It is found in the cytoplasm. In terms of biological role, necessary for formate dehydrogenase activity. The protein is Protein FdhE homolog of Pectobacterium carotovorum subsp. carotovorum (strain PC1).